Consider the following 187-residue polypeptide: Protein canopy-1 (187 aa).

Positions 1–24 are cleaved as a signal peptide; the sequence is MSPWIKHICLVLVAAFMLVKTTES. Residues 28-181 form the Saposin B-type domain; sequence EALYCSACMA…EVSDHCKSSV (154 aa). Cystine bridges form between Cys-32–Cys-177, Cys-35–Cys-170, and Cys-90–Cys-143. A Prevents secretion from ER motif is present at residues 184 to 187; sequence HSEL.

This sequence belongs to the canopy family. In terms of assembly, homodimer. Interacts with fgfr1.

It is found in the endoplasmic reticulum. In terms of biological role, involved in the maintenance of the midbrain-hindbrain boundary (MHB) organizer. Contributes to a positive-feedback loop of FGF signaling in the MHB, enabling the MHB to exert its role as an organizer for the tectal and cerebellar development. This chain is Protein canopy-1 (cnpy1), found in Danio rerio (Zebrafish).